A 2000-amino-acid polypeptide reads, in one-letter code: Myosin-14 (2000 aa).

Residue Ala-2 is modified to N-acetylalanine. Thr-33 is modified (phosphothreonine). The Myosin N-terminal SH3-like domain maps to 47-97 (TARRMVWVPSELHGFEAAALRDEGEEEAEVELAESGRRLRLPRDQIQRMNP). Ser-56 bears the Phosphoserine mark. Residues 101 to 804 (SKAEDMAELT…VLAQLEEERD (704 aa)) enclose the Myosin motor domain. ATP is bound at residue 194–201 (GESGAGKT). Positions 682–704 (LSRLMATLSNTNPSFVRCIVPNH) are actin-binding. Residues 807-836 (VTDIIVSFQAAARGYLARRAFQRRQQQQSA) enclose the IQ domain. Residues 866 to 1951 (LQVTRQDEVL…VTTLRNRLRR (1086 aa)) are a coiled coil. The residue at position 925 (Ser-925) is a Phosphoserine. A disordered region spans residues 1173 to 1197 (RGELEDTLDSTNAQQELRSKREQEV). Position 1198 is a phosphothreonine (Thr-1198). Phosphoserine is present on residues Ser-1249 and Ser-1280. 5 disordered regions span residues 1260 to 1311 (ELSS…AELE), 1597 to 1629 (HERD…RDEE), 1720 to 1751 (SDRA…TLEE), 1910 to 1942 (AEEE…NREV), and 1967 to 2000 (LEEG…ATPQ). Basic and acidic residues predominate over residues 1290–1304 (SDSERARSEAAEKLQ). The span at 1720-1732 (SDRARRQAQQDRD) shows a compositional bias: basic and acidic residues. A compositionally biased stretch (acidic residues) spans 1971–1980 (VASDEEEAEG). A phosphoserine mark is found at Ser-1973 and Ser-1985. Residues 1981–1991 (AEPGSAPGQEP) show a composition bias toward low complexity. At Thr-1998 the chain carries Phosphothreonine.

Belongs to the TRAFAC class myosin-kinesin ATPase superfamily. Myosin family. As to quaternary structure, myosin is a hexameric protein that consists of 2 heavy chain subunits (MHC), 2 alkali light chain subunits (MLC) and 2 regulatory light chain subunits (MLC-2). In terms of tissue distribution, highest levels in lung, kidney, brain and colon, very low levels in liver and bladder and no expression in spleen or seminal vesicle (at protein level). Isoform 1 is expressed in liver, kidney and testis with low levels in skeletal muscle and heart. Isoform 1 and isoform 2 are expressed in brain and lung. Isoform 2 is the main isoform expressed in skeletal muscle and heart. Isoform 3 is limited to brain stem, cerebellum and spinal cord.

In terms of biological role, cellular myosin that appears to play a role in cytokinesis, cell shape, and specialized functions such as secretion and capping. This chain is Myosin-14 (Myh14), found in Mus musculus (Mouse).